The chain runs to 348 residues: Maintenance of mitochondrial morphology protein 1 (348 aa).

Residues 1-35 (MAGKADLGHTGISDNIVERQIFVPQPNNAWSFTQG) are Lumenal-facing. Residues 36-56 (LMCGQASVVVVLLVFIKFFVF) form a helical membrane-spanning segment. Residues 57-348 (SEAPPSSGAA…GKTEKVNGNE (292 aa)) are Cytoplasmic-facing. The SMP-LTD domain maps to 114–323 (NPESLDWFNV…EPKFQVVRLP (210 aa)). The interval 328–348 (RSKNTREPVGAGKTEKVNGNE) is disordered.

This sequence belongs to the MMM1 family. Homodimer. Component of the ER-mitochondria encounter structure (ERMES) or MDM complex, composed of MMM1, MDM10, MDM12 and MDM34. An MMM1 homodimer associates with one molecule of MDM12 on each side in a pairwise head-to-tail manner, and the SMP-LTD domains of MMM1 and MDM12 generate a continuous hydrophobic tunnel for phospholipid trafficking.

Its subcellular location is the endoplasmic reticulum membrane. Functionally, component of the ERMES/MDM complex, which serves as a molecular tether to connect the endoplasmic reticulum (ER) and mitochondria. Components of this complex are involved in the control of mitochondrial shape and protein biogenesis, and function in nonvesicular lipid trafficking between the ER and mitochondria. The MDM12-MMM1 subcomplex functions in the major beta-barrel assembly pathway that is responsible for biogenesis of all outer membrane beta-barrel proteins, and acts in a late step after the SAM complex. The MDM10-MDM12-MMM1 subcomplex further acts in the TOM40-specific pathway after the action of the MDM12-MMM1 complex. Essential for establishing and maintaining the structure of mitochondria and maintenance of mtDNA nucleoids. In Clavispora lusitaniae (strain ATCC 42720) (Yeast), this protein is Maintenance of mitochondrial morphology protein 1.